The following is a 392-amino-acid chain: Acetyl-CoA acetyltransferase (392 aa).

Cysteine 85 acts as the Acyl-thioester intermediate in catalysis. Residues cysteine 206, serine 207, valine 209, and lysine 332 each coordinate CoA. Histidine 336 functions as the Proton acceptor in the catalytic mechanism.

This sequence belongs to the thiolase-like superfamily. Thiolase family. In terms of assembly, interacts with HMG-CoA synthase (HMGCS) that catalyzes the second step in the pathway and with a DUF35 protein. The acetoacetyl-CoA thiolase/HMG-CoA synthase complex channels the intermediate via a fused CoA-binding site, which allows for efficient coupling of the endergonic thiolase reaction with the exergonic HMGCS reaction.

The catalysed reaction is 2 acetyl-CoA = acetoacetyl-CoA + CoA. It functions in the pathway metabolic intermediate biosynthesis; (R)-mevalonate biosynthesis; (R)-mevalonate from acetyl-CoA: step 1/3. Its function is as follows. Catalyzes the condensation of two acetyl-coA molecules into acetoacetyl-CoA. Functions in the mevalonate (MVA) pathway leading to isopentenyl diphosphate (IPP), a key precursor for the biosynthesis of isoprenoid compounds that are building blocks of archaeal membrane lipids. The polypeptide is Acetyl-CoA acetyltransferase (Methanothermococcus thermolithotrophicus (Methanococcus thermolithotrophicus)).